We begin with the raw amino-acid sequence, 793 residues long: Putative potassium transporter 12 (793 aa).

Residues 1 to 54 are Cytoplasmic-facing; sequence MASISDSETTNHGSIWDLDQNLDQPMDEEASRLKNMYTEKKFSSILLLRLAFQS. A helical transmembrane segment spans residues 55–75; sequence LGVVFGDLGTSPLYVFYNIFP. Over 76 to 87 the chain is Extracellular; it reads HGVDDDEDVIGA. The chain crosses the membrane as a helical span at residues 88 to 108; that stretch reads LSLIIYTLTLIPLMKYVFVVL. The Cytoplasmic segment spans residues 109-175; sequence RANDNGQGGT…EGHVYKKNCL (67 aa). A helical transmembrane segment spans residues 176 to 196; it reads LILVLIGTCTAIGDGILTPAI. At 197 to 215 the chain is on the extracellular side; the sequence is SVLSASGGIRVQNQKMSTD. Residues 216–236 traverse the membrane as a helical segment; that stretch reads VVVVVAVIILIGLFSMQHYGT. Over 237 to 238 the chain is Cytoplasmic; it reads DK. A helical membrane pass occupies residues 239–259; sequence VGWLFAPIVLLWFILIGTIGA. At 260 to 289 the chain is on the extracellular side; sequence LNIHKYNSSVLKAYNPVYIYRYFRRGKSES. A glycan (N-linked (GlcNAc...) asparagine) is linked at asparagine 266. The helical transmembrane segment at 290–310 threads the bilayer; it reads WTSLGGIMLSITGTEALYADL. Over 311 to 315 the chain is Cytoplasmic; sequence CHFPV. A helical membrane pass occupies residues 316 to 338; sequence LAIQIAFTLVVFPCLLLAYTGQA. The Extracellular segment spans residues 339–359; that stretch reads AYIISNKDHVVDAFYRSIPDT. A helical membrane pass occupies residues 360–380; it reads IYWPVFIIATLAAIVASQATI. At 381–411 the chain is on the cytoplasmic side; that stretch reads SATYSIIKQALALGCFPRVSVVHTSKKFLGQ. The helical transmembrane segment at 412–432 threads the bilayer; sequence IYIPDINWVLMILCIAVTAGF. The Extracellular segment spans residues 433–444; it reads KNQSQIGNAYGT. The N-linked (GlcNAc...) asparagine glycan is linked to asparagine 434. The chain crosses the membrane as a helical span at residues 445–465; sequence AVVIVMLVTTFLMVPIMLLVW. The Cytoplasmic segment spans residues 466-468; it reads KSH. The helical transmembrane segment at 469-489 threads the bilayer; the sequence is WILVVIFIVLSLMVELPYFTA. The Extracellular portion of the chain corresponds to 490–496; it reads CINKVDQ. A helical membrane pass occupies residues 497–517; it reads GGWVPLVVATTCFIIMYVWHF. Over 518–793 the chain is Cytoplasmic; sequence CTVKRYEFEM…LLNVGQIYYI (276 aa).

It belongs to the HAK/KUP transporter (TC 2.A.72.3) family.

The protein localises to the membrane. Functionally, high-affinity potassium transporter. The polypeptide is Putative potassium transporter 12 (HAK12) (Oryza sativa subsp. japonica (Rice)).